We begin with the raw amino-acid sequence, 393 residues long: Sister chromatid cohesion protein DCC1 (393 aa).

It belongs to the DCC1 family. As to quaternary structure, component of the CTF18-RFC complex which consists of CTF8, CTF18, DSCC1 and the RFC complex. Interacts with CTF8 and CTF18. Interacts with DDX11.

It localises to the nucleus. In terms of biological role, loads PCNA onto primed templates regulating velocity, spacing and restart activity of replication forks. May couple DNA replication to sister chromatid cohesion through regulation of the acetylation of the cohesin subunit SMC3. This is Sister chromatid cohesion protein DCC1 (DSCC1) from Homo sapiens (Human).